Here is an 85-residue protein sequence, read N- to C-terminus: Kappa-theraphotoxin-Gr1a (85 aa).

Residues 1 to 21 (MKTSVFAAILGLALFAVLCSG) form the signal peptide. A propeptide spanning residues 22-49 (SELQEKDLKETLLSAIMETALEAQPEER) is cleaved from the precursor. Intrachain disulfides connect cysteine 51/cysteine 65, cysteine 58/cysteine 70, and cysteine 64/cysteine 77. An involved in active face region spans residues 53–55 (YLF).

It belongs to the neurotoxin 10 (Hwtx-1) family. 09 (HaTx) subfamily. Expressed by the venom gland.

It localises to the secreted. In terms of biological role, inhibits Kv2.1/KCNB1 and Kv4.2/KCND2 voltage-gated potassium channels. Acts as a gating modifier by shifting channel openings to more depolarized voltages and acts via the occupancy of multiple binding sites on the channel. The toxin binding sites are situated on the S3-S4 extracellular linker of the channel. At least two hanatoxin molecules can occupy the Kv2.1/KCNB1 channel, and maybe more (three or four). Can also inhibit calcium channels (Cav2.1/CACNA1A). Needs to partition into the membrane in order to bind to the channel. The protein is Kappa-theraphotoxin-Gr1a of Grammostola rosea (Chilean rose tarantula).